The following is a 353-amino-acid chain: UPF0283 membrane protein YcjF (353 aa).

3 consecutive transmembrane segments (helical) span residues 70–90 (MVMGGLALFGASVVGQGVQWT), 100–120 (VALGGCAAGALIIGAGVGSVV), and 213–233 (ESTLMIAVSPLALVDMAFIAW).

It belongs to the UPF0283 family.

It localises to the cell inner membrane. The sequence is that of UPF0283 membrane protein YcjF from Shigella sonnei (strain Ss046).